The following is a 554-amino-acid chain: MAIQHPDIQPAVNHSVQVAIAGAGPVGLMMANYLGQMGIDVLVVEKLDKLIDYPRAIGIDDEALRTMQSVGLVENVLPHTTPWHAMRFLTPKGRCFADIQPMTDEFGWPRRNAFIQPQVDAVMLEGLSRFPNVRCLFARELEAFSQQNDEVTLHLKTAEGQREIVKAQWLVACDGGASFVRRTLNVPFEGKTAPNQWIVVDIANDPLSTPHIYLCGDPVRPYVSAALPHAVRRFEFMVMPGETEEQLREPQNMRKLLSKVLPNPDNVELIRQRVYTHNARLAQRFRIDRVLLAGDAAHIMPVWQGQGYNSGMRDAFNLAWKLALVIQGKARDALLDTYQQERRDHAKAMIDLSVTAGNVLAPPKRWQGTLRDGVSWLLNYLPPVKRYFLEMRFKPMPQYYGGALVREGEAKHSPVGKMFIQPKVTLENGDVTLLDNAIGANFAVIGWGCNPLWGMSDEQIQQWRALGTRFIQVVPEVQIHTAQDNHDGVLRVGDTQGRLRSWFAQHNASLVVMRPDRFVAATAIPQTLGKTLNKLASVMTLTRPDADVSVEKVA.

FAD is bound by residues 17–46 (QVAIAGAGPVGLMMANYLGQMGIDVLVVEK) and 285–295 (FRIDRVLLAGD).

This sequence belongs to the PheA/TfdB FAD monooxygenase family. FAD serves as cofactor.

It carries out the reaction 3-(3-hydroxyphenyl)propanoate + NADH + O2 + H(+) = 3-(2,3-dihydroxyphenyl)propanoate + NAD(+) + H2O. The catalysed reaction is (2E)-3-(3-hydroxyphenyl)prop-2-enoate + NADH + O2 + H(+) = (2E)-3-(2,3-dihydroxyphenyl)prop-2-enoate + NAD(+) + H2O. It participates in aromatic compound metabolism; 3-phenylpropanoate degradation. Its function is as follows. Catalyzes the insertion of one atom of molecular oxygen into position 2 of the phenyl ring of 3-(3-hydroxyphenyl)propionate (3-HPP) and hydroxycinnamic acid (3HCI). In Escherichia coli O8 (strain IAI1), this protein is 3-(3-hydroxy-phenyl)propionate/3-hydroxycinnamic acid hydroxylase.